The following is a 639-amino-acid chain: 3D-(3,5/4)-trihydroxycyclohexane-1,2-dione hydrolase (639 aa).

A thiamine diphosphate-binding site is contributed by glutamate 65. Residues 437 to 517 (SLPGDLQRMW…INIILFDNSG (81 aa)) are thiamine pyrophosphate binding. Mg(2+) is bound by residues aspartate 488 and asparagine 515.

Belongs to the TPP enzyme family. The cofactor is Mg(2+). Thiamine diphosphate serves as cofactor.

It carries out the reaction 3D-3,5/4-trihydroxycyclohexane-1,2-dione + H2O = 5-deoxy-D-glucuronate + H(+). Its pathway is polyol metabolism; myo-inositol degradation into acetyl-CoA; acetyl-CoA from myo-inositol: step 3/7. Its function is as follows. Involved in the cleavage of the C1-C2 bond of 3D-(3,5/4)-trihydroxycyclohexane-1,2-dione (THcHDO) to yield 5-deoxy-glucuronate (5DG). This chain is 3D-(3,5/4)-trihydroxycyclohexane-1,2-dione hydrolase, found in Geobacillus thermodenitrificans (strain NG80-2).